A 426-amino-acid chain; its full sequence is Enolase (426 aa).

Gln163 contributes to the (2R)-2-phosphoglycerate binding site. Glu205 acts as the Proton donor in catalysis. 3 residues coordinate Mg(2+): Asp242, Glu283, and Asp310. The (2R)-2-phosphoglycerate site is built by Lys335, Arg364, Ser365, and Lys386. Catalysis depends on Lys335, which acts as the Proton acceptor.

It belongs to the enolase family. Mg(2+) serves as cofactor.

It is found in the cytoplasm. Its subcellular location is the secreted. The protein resides in the cell surface. The catalysed reaction is (2R)-2-phosphoglycerate = phosphoenolpyruvate + H2O. It functions in the pathway carbohydrate degradation; glycolysis; pyruvate from D-glyceraldehyde 3-phosphate: step 4/5. In terms of biological role, catalyzes the reversible conversion of 2-phosphoglycerate (2-PG) into phosphoenolpyruvate (PEP). It is essential for the degradation of carbohydrates via glycolysis. The chain is Enolase from Leifsonia xyli subsp. xyli (strain CTCB07).